Consider the following 714-residue polypeptide: Fatty acid oxidation complex subunit alpha (714 aa).

The interval 1–190 (MEMASAFTLN…KLGLVDDVVP (190 aa)) is enoyl-CoA hydratase. The segment at 306–714 (APLNSVGILG…FWKTTATDLQ (409 aa)) is 3-hydroxyacyl-CoA dehydrogenase.

It in the N-terminal section; belongs to the enoyl-CoA hydratase/isomerase family. In the central section; belongs to the 3-hydroxyacyl-CoA dehydrogenase family. In terms of assembly, heterotetramer of two alpha chains (FadJ) and two beta chains (FadI).

It is found in the cytoplasm. The catalysed reaction is a (3S)-3-hydroxyacyl-CoA = a (2E)-enoyl-CoA + H2O. It carries out the reaction a 4-saturated-(3S)-3-hydroxyacyl-CoA = a (3E)-enoyl-CoA + H2O. The enzyme catalyses a (3S)-3-hydroxyacyl-CoA + NAD(+) = a 3-oxoacyl-CoA + NADH + H(+). It catalyses the reaction (3S)-3-hydroxybutanoyl-CoA = (3R)-3-hydroxybutanoyl-CoA. Its pathway is lipid metabolism; fatty acid beta-oxidation. Functionally, catalyzes the formation of a hydroxyacyl-CoA by addition of water on enoyl-CoA. Also exhibits 3-hydroxyacyl-CoA epimerase and 3-hydroxyacyl-CoA dehydrogenase activities. This is Fatty acid oxidation complex subunit alpha from Shigella boydii serotype 4 (strain Sb227).